Here is a 326-residue protein sequence, read N- to C-terminus: Protease inhibitor (326 aa).

The N-terminal stretch at 1–24 is a signal peptide; sequence MKTIRTGMMTLAALAVLGTNVVSA. 2 consecutive repeat copies span residues 177–208 and 272–304. The 2 X 32 AA approximate repeats stretch occupies residues 177–304; sequence IILHVDKETK…DLKAEMKVFA (128 aa).

In terms of processing, proteolytically cleaved to yield at least three forms (BBRPI-A, -B, and -C).

It is found in the secreted. Its function is as follows. Shows inhibitory activity towards serine proteases, such as trypsin, chymotrypsin and subtilisin. May form a trypsin-inhibitor complex in a molar ratio of 1:1. The polypeptide is Protease inhibitor (Brevibacillus choshinensis).